The chain runs to 644 residues: Threonine--tRNA ligase (644 aa).

Residues 1 to 62 (MSFSVTLPDG…DSDVEIAIIT (62 aa)) form the TGS domain. Residues 240-538 (DHRTIGRDLD…LTEIYKGAFP (299 aa)) form a catalytic region. Residues C334, H385, and H515 each coordinate Zn(2+).

It belongs to the class-II aminoacyl-tRNA synthetase family. Homodimer. The cofactor is Zn(2+).

It localises to the cytoplasm. It carries out the reaction tRNA(Thr) + L-threonine + ATP = L-threonyl-tRNA(Thr) + AMP + diphosphate + H(+). Functionally, catalyzes the attachment of threonine to tRNA(Thr) in a two-step reaction: L-threonine is first activated by ATP to form Thr-AMP and then transferred to the acceptor end of tRNA(Thr). Also edits incorrectly charged L-seryl-tRNA(Thr). This Lactobacillus acidophilus (strain ATCC 700396 / NCK56 / N2 / NCFM) protein is Threonine--tRNA ligase.